The primary structure comprises 876 residues: Leucine--tRNA ligase (876 aa).

The short motif at 43-53 (PYPSGRIHMGH) is the 'HIGH' region element. The 'KMSKS' region motif lies at 632–636 (KMSKS). K635 contributes to the ATP binding site.

This sequence belongs to the class-I aminoacyl-tRNA synthetase family.

It is found in the cytoplasm. It catalyses the reaction tRNA(Leu) + L-leucine + ATP = L-leucyl-tRNA(Leu) + AMP + diphosphate. The protein is Leucine--tRNA ligase of Sinorhizobium fredii (strain NBRC 101917 / NGR234).